The following is a 135-amino-acid chain: Probable transporter XF_0766 (135 aa).

The next 4 membrane-spanning stretches (helical) occupy residues 4–24 (YWYP…LLLL), 45–65 (AQDI…SVIF), 71–91 (VTVA…GLGT), and 114–134 (IVAT…MGVY).

This sequence belongs to the TsuA/YedE (TC 9.B.102) family.

Its subcellular location is the cell inner membrane. In Xylella fastidiosa (strain 9a5c), this protein is Probable transporter XF_0766.